We begin with the raw amino-acid sequence, 219 residues long: Adenylate kinase (219 aa).

10 to 15 (GAGKGT) lines the ATP pocket. The tract at residues 30 to 59 (STGDMLRAAVKAGTPLGQQAKKIMDEGGLV) is NMP. Residues Thr-31, Arg-36, 57 to 59 (GLV), 85 to 88 (GFPR), and Gln-92 each bind AMP. An LID region spans residues 122–159 (GRRVHPGSGRVYHVTHNPPRQEGKDDVTGEDLVQREDD). Residues Arg-123 and 132–133 (VY) contribute to the ATP site. The segment at 128-150 (GSGRVYHVTHNPPRQEGKDDVTG) is disordered. Basic and acidic residues predominate over residues 140–150 (PRQEGKDDVTG). AMP-binding residues include Arg-156 and Arg-167. Arg-203 serves as a coordination point for ATP.

The protein belongs to the adenylate kinase family. Monomer.

Its subcellular location is the cytoplasm. The enzyme catalyses AMP + ATP = 2 ADP. The protein operates within purine metabolism; AMP biosynthesis via salvage pathway; AMP from ADP: step 1/1. In terms of biological role, catalyzes the reversible transfer of the terminal phosphate group between ATP and AMP. Plays an important role in cellular energy homeostasis and in adenine nucleotide metabolism. This Halorhodospira halophila (strain DSM 244 / SL1) (Ectothiorhodospira halophila (strain DSM 244 / SL1)) protein is Adenylate kinase.